The sequence spans 274 residues: Putative pyruvate, phosphate dikinase regulatory protein (274 aa).

150–157 (GPSRTSKT) contributes to the ADP binding site.

Belongs to the pyruvate, phosphate/water dikinase regulatory protein family. PDRP subfamily.

It catalyses the reaction N(tele)-phospho-L-histidyl/L-threonyl-[pyruvate, phosphate dikinase] + ADP = N(tele)-phospho-L-histidyl/O-phospho-L-threonyl-[pyruvate, phosphate dikinase] + AMP + H(+). The catalysed reaction is N(tele)-phospho-L-histidyl/O-phospho-L-threonyl-[pyruvate, phosphate dikinase] + phosphate + H(+) = N(tele)-phospho-L-histidyl/L-threonyl-[pyruvate, phosphate dikinase] + diphosphate. Functionally, bifunctional serine/threonine kinase and phosphorylase involved in the regulation of the pyruvate, phosphate dikinase (PPDK) by catalyzing its phosphorylation/dephosphorylation. This Rickettsia peacockii (strain Rustic) protein is Putative pyruvate, phosphate dikinase regulatory protein.